The chain runs to 76 residues: CLAVATA3/ESR (CLE)-related protein 46 (76 aa).

The first 26 residues, 1 to 26, serve as a signal peptide directing secretion; that stretch reads MRRHDIIIKLLLLMCLLLSRFVTREC. The tract at residues 53–76 is disordered; it reads EEKKWHKHPSGPNPTGNRHPPVKH. Hydroxyproline occurs at positions 61 and 64. An O-linked (Ara...) hydroxyproline glycan is attached at P64.

Belongs to the CLV3/ESR signal peptide family. In terms of processing, the O-glycosylation (arabinosylation) of the hydroxyproline Pro-64 enhances binding affinity of the CLE46p peptide for its receptor.

The protein resides in the secreted. Its subcellular location is the extracellular space. In terms of biological role, extracellular signal peptide that regulates cell fate. The chain is CLAVATA3/ESR (CLE)-related protein 46 from Arabidopsis thaliana (Mouse-ear cress).